A 670-amino-acid chain; its full sequence is UvrABC system protein B (670 aa).

One can recognise a Helicase ATP-binding domain in the interval 26 to 414; that stretch reads EGLEDGLAHQ…GGDVIDQVVR (389 aa). Position 39-46 (39-46) interacts with ATP; the sequence is GVTGSGKT. Residues 92-115 carry the Beta-hairpin motif; the sequence is YYDYYQPEAYVPSSDTFIEKDASV. One can recognise a Helicase C-terminal domain in the interval 431 to 597; the sequence is QVDDLLSEIR…GINKKISDIL (167 aa). Residues 630–665 enclose the UVR domain; it reads ELKIRELESKMLTHAQNLEFEEAAALRDEVQVLRAQ.

It belongs to the UvrB family. In terms of assembly, forms a heterotetramer with UvrA during the search for lesions. Interacts with UvrC in an incision complex.

It localises to the cytoplasm. Its function is as follows. The UvrABC repair system catalyzes the recognition and processing of DNA lesions. A damage recognition complex composed of 2 UvrA and 2 UvrB subunits scans DNA for abnormalities. Upon binding of the UvrA(2)B(2) complex to a putative damaged site, the DNA wraps around one UvrB monomer. DNA wrap is dependent on ATP binding by UvrB and probably causes local melting of the DNA helix, facilitating insertion of UvrB beta-hairpin between the DNA strands. Then UvrB probes one DNA strand for the presence of a lesion. If a lesion is found the UvrA subunits dissociate and the UvrB-DNA preincision complex is formed. This complex is subsequently bound by UvrC and the second UvrB is released. If no lesion is found, the DNA wraps around the other UvrB subunit that will check the other stand for damage. This is UvrABC system protein B from Pectobacterium atrosepticum (strain SCRI 1043 / ATCC BAA-672) (Erwinia carotovora subsp. atroseptica).